The sequence spans 837 residues: Tuftelin-interacting protein 11 (837 aa).

Basic and acidic residues predominate over residues 1 to 13 (MSLSHLYRDGEGH). 3 disordered regions span residues 1-31 (MSLS…DWDL), 54-73 (WAER…RARD), and 85-136 (LKKG…AGGT). The tract at residues 1 to 50 (MSLSHLYRDGEGHMDDDEDERENFEITDWDLQNEFNPNRQRHWQTKEEAT) is required for interaction with DHX15. S2 bears the Phosphoserine mark. Acidic residues predominate over residues 14–28 (MDDDEDERENFEITD). A compositionally biased stretch (basic and acidic residues) spans 54 to 64 (WAERDSDEERP). Phosphoserine occurs at positions 59 and 98. Residues 91–102 (EEAELEDSDDEE) show a composition bias toward acidic residues. Over residues 103–116 (KPVKQDEFPKDFGP) the composition is skewed to basic and acidic residues. S144 bears the Phosphoserine mark. The G-patch domain maps to 149-195 (TKGIGQKLLQKMGYVPGRGLGKNAQGIINPIEAKQRKGKGAVGAYGS). 2 disordered regions span residues 183-236 (QRKG…KKKP) and 287-313 (HKHS…ARAP). S210 carries the post-translational modification Phosphoserine. The span at 217 to 231 (EFQKELSQWRKDPSG) shows a compositional bias: basic and acidic residues. Positions 700-705 (VKDKFN) match the Nuclear localization signal motif. The segment at 710-734 (IMNRAVSSNVGAYMQPGAREHIAYL) is required for nuclear speckle localization.

Belongs to the TFP11/STIP family. Identified in the spliceosome C complex. Found in the Intron Large (IL) complex, a post-mRNA release spliceosomal complex containing the excised intron, U2, U5 and U6 snRNPs, and splicing factors. Interacts with TUFT1. Interacts with DHX15; indicative for a recruitment of DHX15 to the IL complex. Interacts with GCFC2.

It is found in the cytoplasm. Its subcellular location is the nucleus. In terms of biological role, involved in pre-mRNA splicing, specifically in spliceosome disassembly during late-stage splicing events. Intron turnover seems to proceed through reactions in two lariat-intron associated complexes termed Intron Large (IL) and Intron Small (IS). In cooperation with DHX15 seems to mediate the transition of the U2, U5 and U6 snRNP-containing IL complex to the snRNP-free IS complex leading to efficient debranching and turnover of excised introns. May play a role in the differentiation of ameloblasts and odontoblasts or in the forming of the enamel extracellular matrix. The chain is Tuftelin-interacting protein 11 (TFIP11) from Bos taurus (Bovine).